The chain runs to 240 residues: MQRRRCRYAIGIDEAGRGPVIGPMVVVGVAVCSNDIDKLVALGVRDSKQLTPVVRAKLYGEILRVALHSVIVKLPPALLDAVNLNQLEVETFEYIASRIAGVHDSPEAVYVDAVGSPEKLAARLSGRLGVRVIAEPGADKTYPIVSAASIVAKVVRDAEIRMLRRLYGVRGSGYPTDPETIAWLAEEYRRNPANPPWFVRRTWSTLKRIAPGWYVEKQATTQPPRGQRSLLDYLLGEKQS.

The RNase H type-2 domain maps to 7–215 (RYAIGIDEAG…LKRIAPGWYV (209 aa)). The a divalent metal cation site is built by Asp-13, Glu-14, and Asp-112.

This sequence belongs to the RNase HII family. Mn(2+) is required as a cofactor. Requires Mg(2+) as cofactor.

The protein resides in the cytoplasm. It carries out the reaction Endonucleolytic cleavage to 5'-phosphomonoester.. Endonuclease that specifically degrades the RNA of RNA-DNA hybrids. This is Ribonuclease HII from Hyperthermus butylicus (strain DSM 5456 / JCM 9403 / PLM1-5).